Consider the following 273-residue polypeptide: 2,3,4,5-tetrahydropyridine-2,6-dicarboxylate N-succinyltransferase (273 aa).

Residues arginine 104 and aspartate 141 each contribute to the substrate site.

The protein belongs to the transferase hexapeptide repeat family. As to quaternary structure, homotrimer.

It is found in the cytoplasm. It carries out the reaction (S)-2,3,4,5-tetrahydrodipicolinate + succinyl-CoA + H2O = (S)-2-succinylamino-6-oxoheptanedioate + CoA. It participates in amino-acid biosynthesis; L-lysine biosynthesis via DAP pathway; LL-2,6-diaminopimelate from (S)-tetrahydrodipicolinate (succinylase route): step 1/3. The sequence is that of 2,3,4,5-tetrahydropyridine-2,6-dicarboxylate N-succinyltransferase from Nitrosospira multiformis (strain ATCC 25196 / NCIMB 11849 / C 71).